The sequence spans 277 residues: Large ribosomal subunit protein uL2 (277 aa).

Residues 222–277 form a disordered region; that stretch reads GSVMNPNDHPHGGGEGKSPVGHPGPLTPWGKPALGLKTRKNKKYSDKFIIKRKNKK.

Belongs to the universal ribosomal protein uL2 family. In terms of assembly, part of the 50S ribosomal subunit. Forms a bridge to the 30S subunit in the 70S ribosome.

In terms of biological role, one of the primary rRNA binding proteins. Required for association of the 30S and 50S subunits to form the 70S ribosome, for tRNA binding and peptide bond formation. It has been suggested to have peptidyltransferase activity; this is somewhat controversial. Makes several contacts with the 16S rRNA in the 70S ribosome. This is Large ribosomal subunit protein uL2 from Clostridium kluyveri (strain NBRC 12016).